The following is a 436-amino-acid chain: Nucleolar protein 4-like (436 aa).

Residues Met1–Pro184 form a disordered region. Residues Ser41–Gln61 are compositionally biased toward low complexity. Ser130 carries the post-translational modification Phosphoserine. Positions Ala160–Asp169 are enriched in acidic residues. A compositionally biased stretch (basic and acidic residues) spans His170–Pro184. Phosphoserine is present on Ser295. Residues Gln351–Thr366 are compositionally biased toward polar residues. Positions Gln351–Ser400 are disordered. Over residues Ser375–Thr396 the composition is skewed to low complexity.

The sequence is that of Nucleolar protein 4-like (NOL4L) from Pongo abelii (Sumatran orangutan).